Reading from the N-terminus, the 161-residue chain is Ribonuclease P protein component 2 (161 aa).

This sequence belongs to the eukaryotic/archaeal RNase P protein component 2 family. In terms of assembly, consists of a catalytic RNA component and at least 4-5 protein subunits.

The protein resides in the cytoplasm. It carries out the reaction Endonucleolytic cleavage of RNA, removing 5'-extranucleotides from tRNA precursor.. Its function is as follows. Part of ribonuclease P, a protein complex that generates mature tRNA molecules by cleaving their 5'-ends. This chain is Ribonuclease P protein component 2, found in Natronomonas pharaonis (strain ATCC 35678 / DSM 2160 / CIP 103997 / JCM 8858 / NBRC 14720 / NCIMB 2260 / Gabara) (Halobacterium pharaonis).